A 232-amino-acid chain; its full sequence is LRRN4 C-terminal-like protein (232 aa).

Residues 1-22 (MPHSPCLLWLLAVTSLVPGTQP) form the signal peptide. The Extracellular segment spans residues 23-189 (LVAGDLEGDE…RLTVPPRPLT (167 aa)). The region spanning 77–172 (PPHPPRLGEV…GAEGLDSADG (96 aa)) is the Fibronectin type-III domain. N127 carries N-linked (GlcNAc...) asparagine glycosylation. Residues 190 to 210 (LLHAAMGVGSALALLSCSALV) form a helical membrane-spanning segment. Topologically, residues 211 to 232 (WHFCLRQRWGCPRRGRPSHAGL) are cytoplasmic.

It is found in the membrane. The polypeptide is LRRN4 C-terminal-like protein (LRRN4CL) (Bos taurus (Bovine)).